Consider the following 242-residue polypeptide: Anamorsin homolog (242 aa).

An N-terminal SAM-like domain region spans residues 1–140 (MMNFADTLVI…NVTAENPDFL (140 aa)). Positions 140–159 (LSNEDDNDEHSSDGEAHENA) are disordered. A linker region spans residues 141-162 (SNEDDNDEHSSDGEAHENAEDN). The span at 148-159 (EHSSDGEAHENA) shows a compositional bias: basic and acidic residues. Residues C205, C208, C216, and C219 each contribute to the [4Fe-4S] cluster site. 2 short sequence motifs (cx2C motif) span residues 205-208 (CGNC) and 216-219 (CASC). Residues 205–219 (CGNCYLGDAFRCASC) are fe-S binding site B.

Belongs to the anamorsin family. In terms of assembly, monomer. [4Fe-4S] cluster is required as a cofactor.

It localises to the cytoplasm. Its subcellular location is the mitochondrion intermembrane space. Functionally, component of the cytosolic iron-sulfur (Fe-S) protein assembly (CIA) machinery. Required for the maturation of extramitochondrial Fe-S proteins. Part of an electron transfer chain functioning in an early step of cytosolic Fe-S biogenesis, facilitating the de novo assembly of a [4Fe-4S] cluster on the cytosolic Fe-S scaffold complex. Electrons are transferred from NADPH via a FAD- and FMN-containing diflavin oxidoreductase. Together with the diflavin oxidoreductase, also required for the assembly of the diferric tyrosyl radical cofactor of ribonucleotide reductase (RNR), probably by providing electrons for reduction during radical cofactor maturation in the catalytic small subunit. This is Anamorsin homolog from Plasmodium vivax (strain Salvador I).